We begin with the raw amino-acid sequence, 121 residues long: Small ribosomal subunit protein uS12 (121 aa).

The segment at 1–25 (MPTINQLVRKNRKQKKSQSKSPVLE) is disordered. Residues 9–18 (RKNRKQKKSQ) are compositionally biased toward basic residues. A 3-methylthioaspartic acid modification is found at D89.

It belongs to the universal ribosomal protein uS12 family. Part of the 30S ribosomal subunit. Contacts proteins S8 and S17. May interact with IF1 in the 30S initiation complex.

With S4 and S5 plays an important role in translational accuracy. Functionally, interacts with and stabilizes bases of the 16S rRNA that are involved in tRNA selection in the A site and with the mRNA backbone. Located at the interface of the 30S and 50S subunits, it traverses the body of the 30S subunit contacting proteins on the other side and probably holding the rRNA structure together. The combined cluster of proteins S8, S12 and S17 appears to hold together the shoulder and platform of the 30S subunit. The chain is Small ribosomal subunit protein uS12 from Rhodopirellula baltica (strain DSM 10527 / NCIMB 13988 / SH1).